The sequence spans 283 residues: Thymidylate synthase (283 aa).

R22 contacts dUMP. Residue C160 is the Nucleophile of the active site. Residues 180–183 (RSCD), N191, and 221–223 (HIY) contribute to the dUMP site. D183 is a binding site for (6R)-5,10-methylene-5,6,7,8-tetrahydrofolate. S282 lines the (6R)-5,10-methylene-5,6,7,8-tetrahydrofolate pocket.

This sequence belongs to the thymidylate synthase family. Bacterial-type ThyA subfamily. As to quaternary structure, homodimer.

It is found in the cytoplasm. It catalyses the reaction dUMP + (6R)-5,10-methylene-5,6,7,8-tetrahydrofolate = 7,8-dihydrofolate + dTMP. It functions in the pathway pyrimidine metabolism; dTTP biosynthesis. In terms of biological role, catalyzes the reductive methylation of 2'-deoxyuridine-5'-monophosphate (dUMP) to 2'-deoxythymidine-5'-monophosphate (dTMP) while utilizing 5,10-methylenetetrahydrofolate (mTHF) as the methyl donor and reductant in the reaction, yielding dihydrofolate (DHF) as a by-product. This enzymatic reaction provides an intracellular de novo source of dTMP, an essential precursor for DNA biosynthesis. The polypeptide is Thymidylate synthase (Vibrio cholerae serotype O1 (strain ATCC 39315 / El Tor Inaba N16961)).